The following is a 334-amino-acid chain: Dihydroorotate dehydrogenase (quinone) (334 aa).

Residues 59 to 63 (AGLDK) and T83 contribute to the FMN site. K63 provides a ligand contact to substrate. Position 108-112 (108-112 (NRMGF)) interacts with substrate. N136 and N169 together coordinate FMN. N169 lines the substrate pocket. S172 (nucleophile) is an active-site residue. N174 contacts substrate. K214 and T242 together coordinate FMN. 243-244 (NT) is a substrate binding site. FMN is bound by residues G265, G294, and 315 to 316 (YS).

The protein belongs to the dihydroorotate dehydrogenase family. Type 2 subfamily. Monomer. Requires FMN as cofactor.

It localises to the cell membrane. The enzyme catalyses (S)-dihydroorotate + a quinone = orotate + a quinol. It participates in pyrimidine metabolism; UMP biosynthesis via de novo pathway; orotate from (S)-dihydroorotate (quinone route): step 1/1. Catalyzes the conversion of dihydroorotate to orotate with quinone as electron acceptor. The chain is Dihydroorotate dehydrogenase (quinone) from Acinetobacter baylyi (strain ATCC 33305 / BD413 / ADP1).